The following is an 823-amino-acid chain: MEIKEVDDRAELLRYTNNIPLLGKLVNHQPLWSTNPKLKSFSLEKISAPDQRRVQEALVVKDLLNVLIGLEGTYIRYFNDYEPSDPETPIEFKIAKKMDPSFKTFSRRIVRYGKQYMILTRAYEKWSDTSFGMVLQRFAYEIRRFLEDVYLKTLVERLERDFNKVPNFSIRELEQIINETEVNKQMELLYNIYEEIFREIEERRTNQSSQEDFNNFMDSMKNESSLHLRLMVAFDTTVYPVPKGGAILKIFQQKILENLGDRSSVMFLKKLLNNISQDYCTMLYEWLTQGILNDPYQEFMTYDDLEGKTDNIFDTRDRAWDTQYFIRKDVLLRDCDSEEDKNLLFKMLRTGILLKVVRASLQIPTIPSNSSDITIQEINDFADLMEGSNLELYVDKCYSRANEIFLKLFFQGYDLINVLKHLQQIFLGYQSGHNVLKFLTKNMGELTKHYRNDNNANYDKLLQNFELERQSENPNNLMRQLLMIQFDTETLPQVLSHYLQIYPEVPENNSANDDSDPLMHANNFKNMNAILFDELSKERTGAYHGSNLELYTPKSAIYHLKFDINIPYPLNIIISRTCMIKYQIILRYQLVLQYHSRLLDETWMDLNKTPSWKYRGYSHTVKRRIVRATRVLHAKMNHFIKTIMEYFNQNVIDKEVYSLEKCYRNPTLAVAIQNELEGGLTNIMTNRCLSDLIPLQLQIFDIVYKFCKFIKSMRAKLCQLDPVLYEKHKSGMMKTLNEGYRTNNGGQEDVGYQEDAALELIQKLIEYISNASSIFRKCLINFTQELSTEKFDFYDSSSVDAAGIERVLYSIVPPRSASASSQR.

This sequence belongs to the TUBGCP family. As to quaternary structure, interacts with TUB4, SPC72 and SPC98.

It localises to the nucleus. It is found in the cytoplasm. The protein resides in the cytoskeleton. The protein localises to the microtubule organizing center. Its subcellular location is the spindle pole body. Functionally, involved in microtubule organization by the microtubule organizing center, the spindle pole body (SPB). Probably part of the microtubule attachment site at the SPB. The chain is Spindle pole body component SPC97 (SPC97) from Saccharomyces cerevisiae (strain ATCC 204508 / S288c) (Baker's yeast).